Reading from the N-terminus, the 658-residue chain is Biosynthetic arginine decarboxylase (658 aa).

Lys127 carries the post-translational modification N6-(pyridoxal phosphate)lysine. 307–317 (FDVGGGLGVDY) provides a ligand contact to substrate.

This sequence belongs to the Orn/Lys/Arg decarboxylase class-II family. SpeA subfamily. As to quaternary structure, homotetramer. Pyridoxal 5'-phosphate is required as a cofactor. It depends on Mg(2+) as a cofactor. Processed post-translationally to a 70 kDa mature form. In terms of processing, the N-terminus is blocked.

The protein resides in the periplasm. The catalysed reaction is L-arginine + H(+) = agmatine + CO2. Its pathway is amine and polyamine biosynthesis; agmatine biosynthesis; agmatine from L-arginine: step 1/1. With respect to regulation, down-regulated by polyamine end products putrescine and spermidine. Catalyzes the biosynthesis of agmatine from arginine. This chain is Biosynthetic arginine decarboxylase (speA), found in Escherichia coli (strain K12).